A 352-amino-acid polypeptide reads, in one-letter code: Probable dual-specificity RNA methyltransferase RlmN (352 aa).

Catalysis depends on Glu92, which acts as the Proton acceptor. Residues Tyr98 to Asp328 form the Radical SAM core domain. Residues Cys105 and Cys333 are joined by a disulfide bond. Residues Cys112, Cys116, and Cys119 each coordinate [4Fe-4S] cluster. Residues Gly159–Glu160, Ser191, Ser214–His216, and Asn290 each bind S-adenosyl-L-methionine. The active-site S-methylcysteine intermediate is the Cys333.

Belongs to the radical SAM superfamily. RlmN family. Requires [4Fe-4S] cluster as cofactor.

The protein resides in the cytoplasm. The enzyme catalyses adenosine(2503) in 23S rRNA + 2 reduced [2Fe-2S]-[ferredoxin] + 2 S-adenosyl-L-methionine = 2-methyladenosine(2503) in 23S rRNA + 5'-deoxyadenosine + L-methionine + 2 oxidized [2Fe-2S]-[ferredoxin] + S-adenosyl-L-homocysteine. It carries out the reaction adenosine(37) in tRNA + 2 reduced [2Fe-2S]-[ferredoxin] + 2 S-adenosyl-L-methionine = 2-methyladenosine(37) in tRNA + 5'-deoxyadenosine + L-methionine + 2 oxidized [2Fe-2S]-[ferredoxin] + S-adenosyl-L-homocysteine. Specifically methylates position 2 of adenine 2503 in 23S rRNA and position 2 of adenine 37 in tRNAs. The chain is Probable dual-specificity RNA methyltransferase RlmN from Alkaliphilus metalliredigens (strain QYMF).